Here is a 232-residue protein sequence, read N- to C-terminus: Cytidylate kinase (232 aa).

An ATP-binding site is contributed by 19 to 27; sequence GPAGVGKTT.

The protein belongs to the cytidylate kinase family. Type 1 subfamily.

The protein localises to the cytoplasm. It catalyses the reaction CMP + ATP = CDP + ADP. The enzyme catalyses dCMP + ATP = dCDP + ADP. In Nitratidesulfovibrio vulgaris (strain ATCC 29579 / DSM 644 / CCUG 34227 / NCIMB 8303 / VKM B-1760 / Hildenborough) (Desulfovibrio vulgaris), this protein is Cytidylate kinase.